The primary structure comprises 147 residues: Large ribosomal subunit protein uL13 (147 aa).

Residues 128–147 (PEHPHSAQQPVPYELKQVAQ) are disordered.

This sequence belongs to the universal ribosomal protein uL13 family. Part of the 50S ribosomal subunit.

Functionally, this protein is one of the early assembly proteins of the 50S ribosomal subunit, although it is not seen to bind rRNA by itself. It is important during the early stages of 50S assembly. The protein is Large ribosomal subunit protein uL13 of Mycobacterium bovis (strain BCG / Pasteur 1173P2).